The following is a 647-amino-acid chain: UvrABC system protein C (647 aa).

The 80-residue stretch at valine 16–isoleucine 95 folds into the GIY-YIG domain. One can recognise a UVR domain in the interval aspartate 208–alanine 243.

Belongs to the UvrC family. In terms of assembly, interacts with UvrB in an incision complex.

The protein localises to the cytoplasm. In terms of biological role, the UvrABC repair system catalyzes the recognition and processing of DNA lesions. UvrC both incises the 5' and 3' sides of the lesion. The N-terminal half is responsible for the 3' incision and the C-terminal half is responsible for the 5' incision. In Mycobacterium leprae (strain Br4923), this protein is UvrABC system protein C.